Reading from the N-terminus, the 396-residue chain is NADH-quinone oxidoreductase subunit D (396 aa).

It belongs to the complex I 49 kDa subunit family. NDH-1 is composed of 14 different subunits. Subunits NuoB, C, D, E, F, and G constitute the peripheral sector of the complex.

It localises to the cell inner membrane. It carries out the reaction a quinone + NADH + 5 H(+)(in) = a quinol + NAD(+) + 4 H(+)(out). Its function is as follows. NDH-1 shuttles electrons from NADH, via FMN and iron-sulfur (Fe-S) centers, to quinones in the respiratory chain. The immediate electron acceptor for the enzyme in this species is believed to be ubiquinone. Couples the redox reaction to proton translocation (for every two electrons transferred, four hydrogen ions are translocated across the cytoplasmic membrane), and thus conserves the redox energy in a proton gradient. This is NADH-quinone oxidoreductase subunit D from Brucella anthropi (strain ATCC 49188 / DSM 6882 / CCUG 24695 / JCM 21032 / LMG 3331 / NBRC 15819 / NCTC 12168 / Alc 37) (Ochrobactrum anthropi).